Reading from the N-terminus, the 95-residue chain is Large ribosomal subunit protein bL25 (95 aa).

Belongs to the bacterial ribosomal protein bL25 family. Part of the 50S ribosomal subunit; part of the 5S rRNA/L5/L18/L25 subcomplex. Contacts the 5S rRNA. Binds to the 5S rRNA independently of L5 and L18.

Functionally, this is one of the proteins that binds to the 5S RNA in the ribosome where it forms part of the central protuberance. In Aeromonas salmonicida (strain A449), this protein is Large ribosomal subunit protein bL25.